A 541-amino-acid chain; its full sequence is Putative acyl-CoA dehydrogenase AidB (541 aa).

Residues 182 to 191, T185, S191, 216 to 218, S218, 423 to 433, and N429 contribute to the FAD site; these read MGMTEKQGGS, FFS, and IWEGSGNIMCL. The segment at 445 to 541 is dsDNA-binding; it reads VYDLLSEAFV…LLRATGGVCV (97 aa).

The protein belongs to the acyl-CoA dehydrogenase family. Homotetramer. Dimer of dimers. The cofactor is FAD.

It is found in the cytoplasm. In terms of biological role, part of the adaptive DNA-repair response to alkylating agents. Could prevent alkylation damage by protecting DNA and destroying alkylating agents that have yet to reach their DNA target. Binds to double-stranded DNA with a preference for a DNA region that includes its own promoter. Shows weak isovaleryl-CoA dehydrogenase activity in vitro. This Escherichia coli (strain K12) protein is Putative acyl-CoA dehydrogenase AidB (aidB).